The following is a 485-amino-acid chain: Polyol:NADP oxidoreductase (485 aa).

Belongs to the mannitol dehydrogenase family.

Its subcellular location is the cytoplasm. The protein is Polyol:NADP oxidoreductase (por) of Gluconobacter oxydans (strain 621H) (Gluconobacter suboxydans).